The sequence spans 519 residues: MNLTILRTKTALEDWCRQKHNHEINFVPTMGGLHQGHQELIKTARSFCKRKHSSQVLVSIFINPLQFDLEEDFKKYPRTFENDCKIAYEAGANAIWAPSFESVFPNGEEAHFKIQVPFSLNKYLCGASREGHFDGVATVVVRLLALVRPNRIFLGEKDWQQLVILRQLINDLGLPVLIHSIPTKRDQDGLPCSSRNVNLSKEERKKVVALPAVLQQAAQAFQENKPINLNNMKTTLEEHDLKVEYLETVDLKNLNPVNHDESKLCLLAAAVHCGNTRLIDHGFLMKRNPIVAIDGPAGAGKSTVTKKFAQKLGLIYLDTGAMYRAVTWLIQENNIDPQNSSELELILNDINLDICLSNTGNQQVLINGKDITTLIRSPTVTSQVSLVAAIGSVREKLTSQQKELGSKGGLVAEGRDIGTAVFPDAELKIFLTATAQERAKRRAIDLKKQGFSTPSLSELEKQIKERDRLDSSREIAPLSKAKDAQELITDGMNIEEVVELLINIFREKIPQEVWPTNAT.

The pantoate--beta-alanine ligase stretch occupies residues Met1–Gly282. Met30–His37 is an ATP binding site. His37 (proton donor) is an active-site residue. Gln66 is a (R)-pantoate binding site. A beta-alanine-binding site is contributed by Gln66. Gly155–Asp158 provides a ligand contact to ATP. Residue Gln161 coordinates (R)-pantoate. Cys192 to Arg195 serves as a coordination point for ATP. Positions Phe283–Thr519 are cytidylate kinase.

The protein in the N-terminal section; belongs to the pantothenate synthetase family. In the C-terminal section; belongs to the cytidylate kinase family. Type 1 subfamily.

It localises to the cytoplasm. It carries out the reaction (R)-pantoate + beta-alanine + ATP = (R)-pantothenate + AMP + diphosphate + H(+). It catalyses the reaction CMP + ATP = CDP + ADP. The catalysed reaction is dCMP + ATP = dCDP + ADP. The protein operates within cofactor biosynthesis; (R)-pantothenate biosynthesis; (R)-pantothenate from (R)-pantoate and beta-alanine: step 1/1. Functionally, catalyzes the condensation of pantoate with beta-alanine in an ATP-dependent reaction via a pantoyl-adenylate intermediate. Its function is as follows. Catalyzes the transfer of a phosphate group from ATP to either CMP or dCMP to form CDP or dCDP and ADP, respectively. The chain is Bifunctional pantoate ligase/cytidylate kinase from Prochlorococcus marinus (strain SARG / CCMP1375 / SS120).